The primary structure comprises 59 residues: Potassium channel toxin alpha-KTx 4.7 (59 aa).

An N-terminal signal peptide occupies residues 1 to 22; that stretch reads MKAFYGILIIFILISMLDLSQQ. 3 disulfide bridges follow: cysteine 29–cysteine 50, cysteine 35–cysteine 55, and cysteine 39–cysteine 57. The interaction with Ca(2+)-activated K(+) channels stretch occupies residues 48–55; that stretch reads GKCMNGKC.

It belongs to the short scorpion toxin superfamily. Potassium channel inhibitor family. Alpha-KTx 04 subfamily. In terms of tissue distribution, expressed by the venom gland.

It localises to the secreted. In terms of biological role, potently blocks Kv1.1/KCNA1 (85%), Kv1.2/KCNA2 (91%), Kv1.3/KCNA3 (89%), Kv1.6/KCNA6 (94%), and Shaker (97%). This is Potassium channel toxin alpha-KTx 4.7 from Tityus stigmurus (Brazilian scorpion).